The chain runs to 362 residues: Cytochrome c peroxidase, mitochondrial (362 aa).

The N-terminal 40 residues, 1–40 (MASASRQILRAASRASTRTAFAPAASRGLAARTIAGRRFY), are a transit peptide targeting the mitochondrion. Catalysis depends on histidine 121, which acts as the Proton acceptor. Histidine 244 is a binding site for heme b. Residue tryptophan 260 is the Tryptophan radical intermediate of the active site.

Belongs to the peroxidase family. Cytochrome c peroxidase subfamily. As to quaternary structure, forms a one-to-one complex with cytochrome c. It depends on heme b as a cofactor.

The protein localises to the mitochondrion matrix. The protein resides in the mitochondrion intermembrane space. The catalysed reaction is 2 Fe(II)-[cytochrome c] + H2O2 + 2 H(+) = 2 Fe(III)-[cytochrome c] + 2 H2O. Its function is as follows. Destroys radicals which are normally produced within the cells and which are toxic to biological systems. The sequence is that of Cytochrome c peroxidase, mitochondrial (CCP1) from Pyricularia oryzae (strain 70-15 / ATCC MYA-4617 / FGSC 8958) (Rice blast fungus).